A 145-amino-acid polypeptide reads, in one-letter code: D-aminoacyl-tRNA deacylase (145 aa).

The Gly-cisPro motif, important for rejection of L-amino acids motif lies at 137 to 138 (GP).

The protein belongs to the DTD family. In terms of assembly, homodimer.

It localises to the cytoplasm. It catalyses the reaction glycyl-tRNA(Ala) + H2O = tRNA(Ala) + glycine + H(+). The enzyme catalyses a D-aminoacyl-tRNA + H2O = a tRNA + a D-alpha-amino acid + H(+). Functionally, an aminoacyl-tRNA editing enzyme that deacylates mischarged D-aminoacyl-tRNAs. Also deacylates mischarged glycyl-tRNA(Ala), protecting cells against glycine mischarging by AlaRS. Acts via tRNA-based rather than protein-based catalysis; rejects L-amino acids rather than detecting D-amino acids in the active site. By recycling D-aminoacyl-tRNA to D-amino acids and free tRNA molecules, this enzyme counteracts the toxicity associated with the formation of D-aminoacyl-tRNA entities in vivo and helps enforce protein L-homochirality. This Azotobacter vinelandii (strain DJ / ATCC BAA-1303) protein is D-aminoacyl-tRNA deacylase.